The following is a 232-amino-acid chain: Beta-casein (232 aa).

The signal sequence occupies residues 1 to 15 (MKLLILACFVALALA). N-linked (GlcNAc...) asparagine glycosylation is present at asparagine 22. Serine 24 carries the post-translational modification Phosphoserine. Residue threonine 27 is modified to Phosphothreonine. Phosphoserine occurs at positions 30, 32, 33, and 34. A compositionally biased stretch (basic and acidic residues) spans 48–63 (KLKREEQQQTENERQN). The interval 48–74 (KLKREEQQQTENERQNKIHQFPQPQPL) is disordered.

Belongs to the beta-casein family. As to expression, mammary gland specific. Secreted in milk.

The protein localises to the secreted. Important role in determination of the surface properties of the casein micelles. This is Beta-casein (CSN2) from Sus scrofa (Pig).